A 234-amino-acid chain; its full sequence is Acetylxylan esterase 2 (234 aa).

Residues 1 to 17 (MHSKFFAASLLGLGAAA) form the signal peptide. Residues 18–27 (IPLEGVMEKR) constitute a propeptide that is removed on maturation. 2 disulfides stabilise this stretch: Cys29/Cys106 and Cys73/Cys79. Ser117 is a catalytic residue. 3 cysteine pairs are disulfide-bonded: Cys128–Cys188, Cys174–Cys206, and Cys198–Cys205. Asp202 is an active-site residue. N-linked (GlcNAc...) asparagine glycosylation occurs at Asn207. Residue His214 is part of the active site.

This sequence belongs to the cutinase family. Acetylxylan esterase subfamily. As to quaternary structure, monomer.

The protein resides in the secreted. It catalyses the reaction Deacetylation of xylans and xylo-oligosaccharides.. Its pathway is glycan degradation; xylan degradation. Degrades acetylated xylans by cleaving acetyl side groups from the hetero-xylan backbone. In Talaromyces purpureogenus (Soft rot fungus), this protein is Acetylxylan esterase 2 (axe-2).